The following is a 271-amino-acid chain: Intercellular adhesion molecule 4 (271 aa).

A signal peptide spans 1–22 (MGSLFPLSLLFFLAAAYPGVGS). The Extracellular portion of the chain corresponds to 23 to 240 (ALGRRTKRAQ…MLAWSPAPTA (218 aa)). 2 Ig-like C2-type domains span residues 62–124 (GKSV…TRWA) and 146–217 (GRKY…LNLD). Residues Asn-68, Asn-78, Asn-190, and Asn-223 are each glycosylated (N-linked (GlcNAc...) asparagine). 4 cysteine pairs are disulfide-bonded: Cys-69–Cys-113, Cys-69–Cys-117, Cys-73–Cys-117, and Cys-153–Cys-210. Residues 241–261 (LASGSIAALVGILLTVGAAYL) form a helical membrane-spanning segment. Topologically, residues 262–271 (CKCLAMKSQA) are cytoplasmic.

Belongs to the immunoglobulin superfamily. ICAM family. Post-translationally, N- and O-glycosylated. As to expression, erythrocytes.

Its subcellular location is the cell membrane. It localises to the secreted. Functionally, ICAM proteins are ligands for the leukocyte adhesion protein LFA-1 (integrin alpha-L/beta-2). ICAM4 is also a ligand for alpha-4/beta-1 and alpha-V integrins. This is Intercellular adhesion molecule 4 (ICAM4) from Homo sapiens (Human).